A 425-amino-acid polypeptide reads, in one-letter code: Monoacylglycerol lipase ABHD2 (425 aa).

The Cytoplasmic portion of the chain corresponds to 1–9 (MNAMLETPE). Residues 10–30 (LPAVFDGVKLAAVAAVLYVIV) traverse the membrane as a helical; Signal-anchor for type II membrane protein segment. Over 31–425 (RCLNLKSPTA…DTEQVEADLE (395 aa)) the chain is Extracellular. In terms of domain architecture, AB hydrolase-1 spans 128–382 (MVICPGIANH…HGGHLGFFEG (255 aa)). N-linked (GlcNAc...) asparagine glycosylation is present at Asn-136. Ser-207 serves as the catalytic Nucleophile. Active-site charge relay system residues include Asp-345 and His-376.

The protein belongs to the AB hydrolase superfamily. AB hydrolase 4 family. As to expression, present in sperm (at protein level).

Its subcellular location is the cell projection. The protein resides in the cilium. The protein localises to the flagellum membrane. It is found in the cell membrane. It catalyses the reaction an acetyl ester + H2O = an aliphatic alcohol + acetate + H(+). The catalysed reaction is Hydrolyzes glycerol monoesters of long-chain fatty acids.. It carries out the reaction a triacylglycerol + H2O = a diacylglycerol + a fatty acid + H(+). The enzyme catalyses 2-(5Z,8Z,11Z,14Z-eicosatetraenoyl)-glycerol + H2O = glycerol + (5Z,8Z,11Z,14Z)-eicosatetraenoate + H(+). It catalyses the reaction a butanoate ester + H2O = an aliphatic alcohol + butanoate + H(+). The catalysed reaction is hexadecanoate ester + H2O = an aliphatic alcohol + hexadecanoate + H(+). With respect to regulation, acylglycerol lipase activity is activated upon binding to progesterone. Functionally, progesterone-dependent acylglycerol lipase that catalyzes hydrolysis of endocannabinoid arachidonoylglycerol (AG) from cell membrane. Acts as a progesterone receptor: progesterone-binding activates the acylglycerol lipase activity, mediating degradation of 1-arachidonoylglycerol (1AG) and 2-arachidonoylglycerol (2AG) to glycerol and arachidonic acid (AA). Also displays an ester hydrolase activity against acetyl ester, butanoate ester and hexadecanoate ester. Plays a key role in sperm capacitation in response to progesterone by mediating degradation of 2AG, an inhibitor of the sperm calcium channel CatSper, leading to calcium influx via CatSper and sperm activation. May also play a role in smooth muscle cells migration. This Homo sapiens (Human) protein is Monoacylglycerol lipase ABHD2.